The following is a 560-amino-acid chain: Alpha-keto-acid decarboxylase (560 aa).

Residue E61 participates in thiamine diphosphate binding. The tract at residues 396–478 (TSFYGMADHR…VVVNNDGYTV (83 aa)) is thiamine pyrophosphate binding. Positions 446, 473, and 475 each coordinate Mg(2+).

The protein belongs to the TPP enzyme family. It depends on a metal cation as a cofactor. Requires thiamine diphosphate as cofactor.

Decarboxylates branched-chain and aromatic alpha-keto acids to aldehydes. This Mycobacterium bovis (strain ATCC BAA-935 / AF2122/97) protein is Alpha-keto-acid decarboxylase (kdc).